We begin with the raw amino-acid sequence, 65 residues long: Large ribosomal subunit protein uL30 (65 aa).

It belongs to the universal ribosomal protein uL30 family. In terms of assembly, part of the 50S ribosomal subunit.

The protein is Large ribosomal subunit protein uL30 of Aster yellows witches'-broom phytoplasma (strain AYWB).